Here is a 490-residue protein sequence, read N- to C-terminus: Gallate decarboxylase (490 aa).

D165 serves as a coordination point for Mn(2+). Residues 168-170 (IHR) and G187 contribute to the prenylated FMN site. Position 233 (E233) interacts with Mn(2+). Catalysis depends on E289, which acts as the Proton acceptor.

This sequence belongs to the UbiD family. Prenylated FMN is required as a cofactor. Mn(2+) serves as cofactor.

It catalyses the reaction 3,4,5-trihydroxybenzoate + H(+) = 1,2,3-trihydroxybenzene + CO2. The enzyme catalyses 3,4-dihydroxybenzoate + H(+) = catechol + CO2. Its function is as follows. Involved in tannin degradation. Catalyzes the decarboxylation of gallic acid and protocatechuic acid to pyrogallol and catechol, respectively. The polypeptide is Gallate decarboxylase (Lactiplantibacillus plantarum (strain ATCC BAA-793 / NCIMB 8826 / WCFS1) (Lactobacillus plantarum)).